The primary structure comprises 310 residues: HPr kinase/phosphorylase (310 aa).

Catalysis depends on residues histidine 138 and lysine 159. 153 to 160 (GASGIGKS) serves as a coordination point for ATP. Serine 160 contributes to the Mg(2+) binding site. The active-site Proton acceptor; for phosphorylation activity. Proton donor; for dephosphorylation activity is aspartate 177. The interval 201 to 210 (IEIRGVGIID) is important for the catalytic mechanism of both phosphorylation and dephosphorylation. Glutamate 202 provides a ligand contact to Mg(2+). Arginine 243 is an active-site residue. Residues 264 to 269 (PVKTGR) are important for the catalytic mechanism of dephosphorylation.

The protein belongs to the HPrK/P family. As to quaternary structure, homohexamer. The cofactor is Mg(2+).

It catalyses the reaction [HPr protein]-L-serine + ATP = [HPr protein]-O-phospho-L-serine + ADP + H(+). It carries out the reaction [HPr protein]-O-phospho-L-serine + phosphate + H(+) = [HPr protein]-L-serine + diphosphate. Functionally, catalyzes the ATP- as well as the pyrophosphate-dependent phosphorylation of a specific serine residue in HPr, a phosphocarrier protein of the phosphoenolpyruvate-dependent sugar phosphotransferase system (PTS). HprK/P also catalyzes the pyrophosphate-producing, inorganic phosphate-dependent dephosphorylation (phosphorolysis) of seryl-phosphorylated HPr (P-Ser-HPr). The two antagonistic activities of HprK/P are regulated by several intracellular metabolites, which change their concentration in response to the absence or presence of rapidly metabolisable carbon sources (glucose, fructose, etc.) in the growth medium. Therefore, by controlling the phosphorylation state of HPr, HPrK/P is a sensor enzyme that plays a major role in the regulation of carbon metabolism and sugar transport: it mediates carbon catabolite repression (CCR), and regulates PTS-catalyzed carbohydrate uptake and inducer exclusion. In Lactococcus lactis subsp. cremoris (strain SK11), this protein is HPr kinase/phosphorylase.